The sequence spans 503 residues: 2-isopropylmalate synthase (503 aa).

Residues 4–264 (LYIFDTTLRD…EVSIKTEEIY (261 aa)) form the Pyruvate carboxyltransferase domain. Residues Asp-13, His-201, His-203, and Asn-237 each coordinate Mn(2+). The regulatory domain stretch occupies residues 388-503 (KLRHLQVVSG…NQLVMLKGKD (116 aa)).

It belongs to the alpha-IPM synthase/homocitrate synthase family. LeuA type 1 subfamily. Homodimer. It depends on Mn(2+) as a cofactor.

The protein resides in the cytoplasm. The catalysed reaction is 3-methyl-2-oxobutanoate + acetyl-CoA + H2O = (2S)-2-isopropylmalate + CoA + H(+). Its pathway is amino-acid biosynthesis; L-leucine biosynthesis; L-leucine from 3-methyl-2-oxobutanoate: step 1/4. In terms of biological role, catalyzes the condensation of the acetyl group of acetyl-CoA with 3-methyl-2-oxobutanoate (2-ketoisovalerate) to form 3-carboxy-3-hydroxy-4-methylpentanoate (2-isopropylmalate). This Dictyoglomus turgidum (strain DSM 6724 / Z-1310) protein is 2-isopropylmalate synthase.